The following is a 247-amino-acid chain: Ubiquinone biosynthesis O-methyltransferase (247 aa).

S-adenosyl-L-methionine contacts are provided by Arg41, Gly72, Asp93, and Met136.

It belongs to the methyltransferase superfamily. UbiG/COQ3 family.

It catalyses the reaction a 3-demethylubiquinol + S-adenosyl-L-methionine = a ubiquinol + S-adenosyl-L-homocysteine + H(+). The catalysed reaction is a 3-(all-trans-polyprenyl)benzene-1,2-diol + S-adenosyl-L-methionine = a 2-methoxy-6-(all-trans-polyprenyl)phenol + S-adenosyl-L-homocysteine + H(+). It participates in cofactor biosynthesis; ubiquinone biosynthesis. Functionally, O-methyltransferase that catalyzes the 2 O-methylation steps in the ubiquinone biosynthetic pathway. The chain is Ubiquinone biosynthesis O-methyltransferase from Bartonella tribocorum (strain CIP 105476 / IBS 506).